The sequence spans 104 residues: Large ribosomal subunit protein bL21 (104 aa).

It belongs to the bacterial ribosomal protein bL21 family. In terms of assembly, part of the 50S ribosomal subunit. Contacts protein L20.

Functionally, this protein binds to 23S rRNA in the presence of protein L20. The chain is Large ribosomal subunit protein bL21 from Symbiobacterium thermophilum (strain DSM 24528 / JCM 14929 / IAM 14863 / T).